Reading from the N-terminus, the 192-residue chain is Elongation factor P (192 aa).

Belongs to the elongation factor P family.

Its subcellular location is the cytoplasm. It functions in the pathway protein biosynthesis; polypeptide chain elongation. In terms of biological role, involved in peptide bond synthesis. Stimulates efficient translation and peptide-bond synthesis on native or reconstituted 70S ribosomes in vitro. Probably functions indirectly by altering the affinity of the ribosome for aminoacyl-tRNA, thus increasing their reactivity as acceptors for peptidyl transferase. This chain is Elongation factor P (efp), found in Aquifex aeolicus (strain VF5).